The following is a 1355-amino-acid chain: Transcription factor MAR1 (1355 aa).

Positions Cys23–Cys52 form a DNA-binding region, zn(2)-C6 fungal-type. Disordered regions lie at residues Thr586–Asn614, Ser918–Asp942, and Pro1221–Leu1253. A compositionally biased stretch (low complexity) spans Asn589–Ser603. Over residues Glu604 to Asn614 the composition is skewed to polar residues. Over residues Ser918–Ser927 the composition is skewed to low complexity. Residues Ser1225–Ser1238 show a composition bias toward polar residues.

It is found in the nucleus. Transcription factor that contributes to plasma membrane sphingolipid incorporation and membrane permeability, decreasing fluconazole accumulation. Regulates 337 genes under fluconazole stress, including several related to lipid biosynthesis pathways such as RSB1, encoding a sphingoid long-chain base efflux transporter. Associates with the promoter of RSB1 in the region containing two 5'-CCCCTCC-3' motifs and increases its promoter occupancy upon fluconazole stress. The protein is Transcription factor MAR1 of Candida glabrata (strain ATCC 2001 / BCRC 20586 / JCM 3761 / NBRC 0622 / NRRL Y-65 / CBS 138) (Yeast).